We begin with the raw amino-acid sequence, 149 residues long: MKVIATNKKAYSDYNILETYEAGIELRGTEVKALRESGANFKDSFCRIKNGEVFLLNLNIPQYRNGNLNNHDPERPRRLLLHKKEIHRLIGKVKEQGLTIIPTKIYFNSRGLVKVEIAVAKGKKKYDKREDIKKREINRKINEYLKRNR.

Belongs to the SmpB family.

The protein localises to the cytoplasm. Functionally, required for rescue of stalled ribosomes mediated by trans-translation. Binds to transfer-messenger RNA (tmRNA), required for stable association of tmRNA with ribosomes. tmRNA and SmpB together mimic tRNA shape, replacing the anticodon stem-loop with SmpB. tmRNA is encoded by the ssrA gene; the 2 termini fold to resemble tRNA(Ala) and it encodes a 'tag peptide', a short internal open reading frame. During trans-translation Ala-aminoacylated tmRNA acts like a tRNA, entering the A-site of stalled ribosomes, displacing the stalled mRNA. The ribosome then switches to translate the ORF on the tmRNA; the nascent peptide is terminated with the 'tag peptide' encoded by the tmRNA and targeted for degradation. The ribosome is freed to recommence translation, which seems to be the essential function of trans-translation. This Thermosipho africanus (strain TCF52B) protein is SsrA-binding protein.